We begin with the raw amino-acid sequence, 552 residues long: Protein FAM234A (552 aa).

The Cytoplasmic segment spans residues 1 to 48 (MTDGKDLEAEIHPLKSENRKVPENAGALAGKEPRGTPAPQTRLSHCRT). Residues 49-69 (AAFFLSLFACLLVVFVVSFII) form a helical; Signal-anchor for type II membrane protein membrane-spanning segment. Residues 70–552 (PCPDRPALQG…LSRLRYRSEA (483 aa)) lie on the Extracellular side of the membrane. 3 N-linked (GlcNAc...) asparagine glycosylation sites follow: Asn-115, Asn-238, and Asn-473.

Belongs to the FAM234 family.

The protein resides in the membrane. The polypeptide is Protein FAM234A (FAM234A) (Bos taurus (Bovine)).